The chain runs to 147 residues: Glucosamine 6-phosphate N-acetyltransferase (147 aa).

The N-acetyltransferase domain occupies 7-147 (LELRVLEESD…AHERQMRLDL (141 aa)). D-glucosamine 6-phosphate-binding positions include Thr28 and 86-88 (EDV). Acetyl-CoA is bound by residues 88–90 (VVV) and 96–101 (GAGLGK). Residues 117-118 (YK) and Asp122 each bind D-glucosamine 6-phosphate. 131-133 (YEK) provides a ligand contact to acetyl-CoA.

It belongs to the acetyltransferase family. GNA1 subfamily. As to quaternary structure, homodimer. Post-translationally, contains poly-N-acetyllactosamines.

The protein localises to the glycosome. The enzyme catalyses D-glucosamine 6-phosphate + acetyl-CoA = N-acetyl-D-glucosamine 6-phosphate + CoA + H(+). It participates in nucleotide-sugar biosynthesis; UDP-N-acetyl-alpha-D-glucosamine biosynthesis; N-acetyl-alpha-D-glucosamine 1-phosphate from alpha-D-glucosamine 6-phosphate (route I): step 1/2. Its function is as follows. Involved in the biosynthesis of UDP-N-acetyl-alpha-D-glucosamine. Catalyzes the formation of N-acetyl-D-glucosamine 6-phosphate from acetyl-coenzyme A (acetyl-CoA) and D-glucosamine 6-phosphate. This chain is Glucosamine 6-phosphate N-acetyltransferase, found in Trypanosoma brucei brucei.